We begin with the raw amino-acid sequence, 466 residues long: Gastric inhibitory polypeptide receptor (466 aa).

Positions 1–21 are cleaved as a signal peptide; that stretch reads MTTSPILQLLLRLSLCGLLLQ. The Extracellular segment spans residues 22–138; sequence RAETGSKGQT…DQRLILERLQ (117 aa). Cystine bridges form between Cys46-Cys70, Cys61-Cys103, and Cys84-Cys118. Residues Asn62 and Asn77 are each glycosylated (N-linked (GlcNAc...) asparagine). A helical membrane pass occupies residues 139-161; it reads VMYTVGYSLSLATLLLALLILSL. Topologically, residues 162 to 169 are cytoplasmic; it reads FRRLHCTR. Residues 170–189 form a helical membrane-spanning segment; sequence NYIHINLFTSFMLRAAAILS. Over 190–217 the chain is Extracellular; the sequence is RDRLLPRPGPYLGDQALALWNQALAACR. A helical membrane pass occupies residues 218–242; sequence TAQIVTQYCVGANYTWLLVEGVYLH. The Cytoplasmic segment spans residues 243-254; sequence SLLVLVGGSEEG. Residues 255–278 traverse the membrane as a helical segment; that stretch reads HFRYYLLLGWGAPALFVIPWVIVR. At 279–293 the chain is on the extracellular side; sequence YLYENTQCWERNEVK. A helical membrane pass occupies residues 294–319; the sequence is AIWWIIRTPILMTILINFLIFIRILG. Topologically, residues 320–341 are cytoplasmic; it reads ILLSKLRTRQMRCRDYRLRLAR. A helical transmembrane segment spans residues 342-362; the sequence is STLTLVPLLGVHEVVFAPVTE. At 363-377 the chain is on the extracellular side; it reads EQARGALRFAKLGFE. The helical transmembrane segment at 378 to 398 threads the bilayer; sequence IFLSSFQGFLVSVLYCFINKE. Residues 399–466 lie on the Cytoplasmic side of the membrane; it reads VQSEIRRGWH…EASRELESYC (68 aa). The tract at residues 427–466 is disordered; sequence AFRALPSGSGPGEVPTSRGLSSGTLPGPGNEASRELESYC.

It belongs to the G-protein coupled receptor 2 family. In terms of assembly, may form homodimers and heterodimers with GLP1R. Post-translationally, N-glycosylation is required for cell surface expression and lengthens receptor half-life by preventing degradation in the ER.

The protein localises to the cell membrane. This is a receptor for GIP. The activity of this receptor is mediated by G proteins which activate adenylyl cyclase. This chain is Gastric inhibitory polypeptide receptor (GIPR), found in Homo sapiens (Human).